Consider the following 161-residue polypeptide: MPADLHPDLDALAPLLGTWAGQGAGEYPTIEPFEYLEEVVFSHVGKPFLVYAQKTRAVADGTPLHAETGYLRVPKPGQVELVLAHPSGITEIEVGTYSASGGVIEMEMVTTAIGMTPTAKEVTALSRSFRMVGDELSYRLRMGAVGLPLQHHLGARLRRKS.

The short motif at 17–23 is the GXWXGXG element; that stretch reads GTWAGQG. His-152 is a heme b binding site.

The protein belongs to the nitrobindin family. Homodimer. Heme b is required as a cofactor.

It catalyses the reaction peroxynitrite = nitrate. It functions in the pathway nitrogen metabolism. In terms of biological role, heme-binding protein able to scavenge peroxynitrite and to protect free L-tyrosine against peroxynitrite-mediated nitration, by acting as a peroxynitrite isomerase that converts peroxynitrite to nitrate. Therefore, this protein likely plays a role in peroxynitrite sensing and in the detoxification of reactive nitrogen and oxygen species (RNS and ROS, respectively). Is able to bind nitric oxide (NO) in vitro, but may act as a sensor of peroxynitrite levels in vivo. In Mycobacterium ulcerans (strain Agy99), this protein is Peroxynitrite isomerase 2.